The following is a 160-amino-acid chain: Transcription antitermination protein NusB (160 aa).

It belongs to the NusB family.

Its function is as follows. Involved in transcription antitermination. Required for transcription of ribosomal RNA (rRNA) genes. Binds specifically to the boxA antiterminator sequence of the ribosomal RNA (rrn) operons. This Nitrobacter hamburgensis (strain DSM 10229 / NCIMB 13809 / X14) protein is Transcription antitermination protein NusB.